Here is a 252-residue protein sequence, read N- to C-terminus: Trans-aconitate 2-methyltransferase (252 aa).

This sequence belongs to the methyltransferase superfamily. Tam family.

It localises to the cytoplasm. It carries out the reaction trans-aconitate + S-adenosyl-L-methionine = (E)-3-(methoxycarbonyl)pent-2-enedioate + S-adenosyl-L-homocysteine. Catalyzes the S-adenosylmethionine monomethyl esterification of trans-aconitate. This chain is Trans-aconitate 2-methyltransferase, found in Escherichia coli O9:H4 (strain HS).